Reading from the N-terminus, the 910-residue chain is Short transient receptor potential channel 3 (910 aa).

The segment at 1-93 (MSTKVKKCRE…VRGPAFMFGA (93 aa)) is disordered. The Cytoplasmic segment spans residues 1 to 448 (MSTKVKKCRE…KILRSPFMKF (448 aa)). Positions 19–29 (PEEEEDGEAEG) are enriched in acidic residues. A compositionally biased stretch (pro residues) spans 48 to 58 (PPCPRAPPSPG). Positions 59 to 68 (PDASSEGSPS) are enriched in low complexity. ANK repeat units lie at residues 100 to 129 (AEEE…TLNV), 135 to 164 (MGQN…LARI), 166 to 192 (DALL…FAAS), and 221 to 250 (PDIT…RIER). Residue glutamate 147 participates in Ca(2+) binding. The helical transmembrane segment at 449 to 466 (VAHAASFIIFLGLLVFNA) threads the bilayer. The Extracellular segment spans residues 467 to 497 (SDRFEGITTLPNITVIDYPKQIFRVKTTQFT). A glycan (N-linked (GlcNAc...) asparagine) is linked at asparagine 478. A helical membrane pass occupies residues 498-516 (WTEMLIMVWVLGMMWSECK). Residues glutamate 514, glutamate 517, and asparagine 532 each coordinate Ca(2+). Residues 517–529 (ELWLEGPREYIVQ) lie on the Cytoplasmic side of the membrane. The chain crosses the membrane as a helical span at residues 530–551 (LWNVLDFGMLSIFIAAFTARFL). Over 552 to 595 (AFLQATKAQQYVDSHVQESDLSEVTLPPEVQYFTYARDKWLPSD) the chain is Extracellular. A helical transmembrane segment spans residues 596–619 (PQIISEGLYAIAVVLSFSRIAYIL). At 620–638 (PANESFGPLQISLGRTVKD) the chain is on the cytoplasmic side. Residues 623-652 (ESFGPLQISLGRTVKDIFKFMVLFIMVFLA) form an ANK 5 repeat. A helical transmembrane segment spans residues 639–662 (IFKFMVLFIMVFLAFMIGMFILYS). The Extracellular portion of the chain corresponds to 663–702 (YYLGAKVNPAFTTVEESFKTLFWSIFGLSEVTSVVLKYDH). A helical transmembrane segment spans residues 703 to 728 (KFIENIGYVLYGIYNVTMVVVLLNML). Over 729–910 (IAMINSSYQE…KLNPSVLRCE (182 aa)) the chain is Cytoplasmic. Positions 860, 863, 865, and 872 each coordinate Ca(2+).

This sequence belongs to the transient receptor (TC 1.A.4) family. STrpC subfamily. TRPC3 sub-subfamily. As to quaternary structure, homotetramer. Interacts with ITPR1, ITPR3, MX1 and RNF24. Interacts with JPH2; the interaction is involved in maintaining Ca(2+) homeostasis in skeletal muscle and is mediated by JPH2 'Ser-165' phosphorylation. In terms of tissue distribution, abundantly expressed in brain. Concentrated in cerebellar Purkinje cells and sparsely localized in cerebellar granule lyer, pontine nuclei and thalamus. Lower levels detected in other tissues.

It localises to the cell membrane. The catalysed reaction is Ca(2+)(in) = Ca(2+)(out). With respect to regulation, activated by diacylglycerol (DAG) in a membrane-delimited fashion, independently of protein kinase C. Activated by inositol 1,4,5-triphosphate receptors (ITPR) with bound IP3. May be activated by internal calcium store depletion. Inhibited by intracellular Ca(2+). Forms a receptor-activated non-selective calcium permeant cation channel. May be operated by a phosphatidylinositol second messenger system activated by receptor tyrosine kinases or G-protein coupled receptors. The sequence is that of Short transient receptor potential channel 3 (Trpc3) from Mus musculus (Mouse).